The primary structure comprises 211 residues: Allatostatins MIP (211 aa).

Positions 1-24 (MAHTKTRRTYGFLMVLLILGSACG) are cleaved as a signal peptide. Positions 25–63 (NLVASGSAGSPPSNEPGGGGLSEQVVLDQLSESDLYGNN) are excised as a propeptide. Residue W74 is modified to Tryptophan amide. The propeptide occupies 78–148 (SSSGDVSDPD…DDLAGEPDVE (71 aa)). Over residues 115 to 135 (ASGQSAQQQQQQPLQQQSQSG) the composition is skewed to low complexity. The interval 115 to 142 (ASGQSAQQQQQQPLQQQSQSGEDFDDLA) is disordered. 4 positions are modified to tryptophan amide: W159, W175, W189, and W202. The segment at 168 to 190 (WNKFRGAWGKREPTWNNLKGMWG) is disordered. A propeptide spanning residues 206–211 (SQLPSN) is cleaved from the precursor.

In larvae, strongly expressed in the midgut region before and in between the copper cells, and in a group of cells in the posterior part of the larval midgut. Expressed in the neurons of many areas including the subesophageal ganglion/tritocerebrum (SOG), olfactory glomeruli, lateral ventral protocerebrum, mushroom body, the optic lobe medulla and in the antennal lobes.

It is found in the secreted. Ligand for the sex peptide receptor (SPR). Stabilizes sleep and maintains sleep homeostasis to inhibit the activity of wake-promoting circuits, such as those that involve the pigment dispersing factor (pdf) neurons. Regulated by the circadian clock network and pathways associated with a sleep homeostat. May also have a regulatory role in gut motility. The protein is Allatostatins MIP (Mip) of Drosophila melanogaster (Fruit fly).